A 957-amino-acid chain; its full sequence is Bifunctional glutamine synthetase adenylyltransferase/adenylyl-removing enzyme (957 aa).

Residues 1–449 (MTQHLERPEL…VFDDIIGTDE (449 aa)) are adenylyl removase. Residues 457 to 957 (SEQYNEMWTM…QEYLVPSSDE (501 aa)) are adenylyl transferase.

Belongs to the GlnE family. The cofactor is Mg(2+).

The enzyme catalyses [glutamine synthetase]-O(4)-(5'-adenylyl)-L-tyrosine + phosphate = [glutamine synthetase]-L-tyrosine + ADP. The catalysed reaction is [glutamine synthetase]-L-tyrosine + ATP = [glutamine synthetase]-O(4)-(5'-adenylyl)-L-tyrosine + diphosphate. Its function is as follows. Involved in the regulation of glutamine synthetase GlnA, a key enzyme in the process to assimilate ammonia. When cellular nitrogen levels are high, the C-terminal adenylyl transferase (AT) inactivates GlnA by covalent transfer of an adenylyl group from ATP to specific tyrosine residue of GlnA, thus reducing its activity. Conversely, when nitrogen levels are low, the N-terminal adenylyl removase (AR) activates GlnA by removing the adenylyl group by phosphorolysis, increasing its activity. The regulatory region of GlnE binds the signal transduction protein PII (GlnB) which indicates the nitrogen status of the cell. The protein is Bifunctional glutamine synthetase adenylyltransferase/adenylyl-removing enzyme of Photobacterium profundum (strain SS9).